Reading from the N-terminus, the 342-residue chain is RNA 3'-terminal phosphate cyclase (342 aa).

ATP-binding positions include Gln102 and 283 to 287; that span reads HLADQ. His308 acts as the Tele-AMP-histidine intermediate in catalysis.

This sequence belongs to the RNA 3'-terminal cyclase family. Type 1 subfamily.

Its subcellular location is the cytoplasm. It carries out the reaction a 3'-end 3'-phospho-ribonucleotide-RNA + ATP = a 3'-end 2',3'-cyclophospho-ribonucleotide-RNA + AMP + diphosphate. In terms of biological role, catalyzes the conversion of 3'-phosphate to a 2',3'-cyclic phosphodiester at the end of RNA. The mechanism of action of the enzyme occurs in 3 steps: (A) adenylation of the enzyme by ATP; (B) transfer of adenylate to an RNA-N3'P to produce RNA-N3'PP5'A; (C) and attack of the adjacent 2'-hydroxyl on the 3'-phosphorus in the diester linkage to produce the cyclic end product. The biological role of this enzyme is unknown but it is likely to function in some aspects of cellular RNA processing. The chain is RNA 3'-terminal phosphate cyclase from Pseudomonas fluorescens (strain ATCC BAA-477 / NRRL B-23932 / Pf-5).